Consider the following 350-residue polypeptide: Methionine aminopeptidase 1D, chloroplastic/mitochondrial (350 aa).

Residues 1–49 constitute a chloroplast and mitochondrion transit peptide; sequence MAGVKSLQPRLISSFLGNNSIRSTQPLIHLFRFDLGRRHVSMQLSRTFS. Gly50 carries the N-acetylglycine modification. The segment at 71–90 is disordered; it reads RLRPGNVSPRRPVPGHITKP. His180 contributes to the substrate binding site. Positions 197, 208, and 271 each coordinate a divalent metal cation. His278 contacts substrate. A divalent metal cation-binding residues include Glu303 and Glu334.

This sequence belongs to the peptidase M24A family. Methionine aminopeptidase type 1 subfamily. Requires Co(2+) as cofactor. The cofactor is Zn(2+). Mn(2+) is required as a cofactor. Fe(2+) serves as cofactor. Ubiquitous. Preferentially expressed in green tissues.

The protein resides in the plastid. Its subcellular location is the chloroplast. It is found in the mitochondrion. The enzyme catalyses Release of N-terminal amino acids, preferentially methionine, from peptides and arylamides.. In terms of biological role, removes the N-terminal methionine from nascent proteins. The N-terminal methionine is often cleaved when the second residue in the primary sequence is small and uncharged (Met-Ala-, Cys, Gly, Pro, Ser, Thr, or Val). In Arabidopsis thaliana (Mouse-ear cress), this protein is Methionine aminopeptidase 1D, chloroplastic/mitochondrial (MAP1D).